Consider the following 792-residue polypeptide: Ribonucleoside-diphosphate reductase large subunit (792 aa).

Positions 1–92 (MHVIKRDGRQ…VSNLHKEAKK (92 aa)) constitute an ATP-cone domain. Residues 5–6 (KR), 11–17 (ERVMFDK), Thr53, and Asp57 each bind ATP. Lys17 carries the post-translational modification N6-acetyllysine. The GDP site is built by Ser202 and Ser217. Cys218 and Cys444 are joined by a disulfide. Residues 226-228 (DSI), Lys243, Arg256, and 263-264 (AG) contribute to the dTTP site. Lys376 bears the N6-acetyllysine mark. The active-site Proton acceptor is the Ser427. The active-site Cysteine radical intermediate is Cys429. GDP contacts are provided by residues Glu431 and 604–607 (TAST). The active-site Proton acceptor is the Glu431. Thr751 is subject to Phosphothreonine.

Belongs to the ribonucleoside diphosphate reductase large chain family. Heterodimer of a large and a small subunit. Interacts with RRM2B. Interacts with AHCYL1 which inhibits its activity.

Its subcellular location is the cytoplasm. The catalysed reaction is a 2'-deoxyribonucleoside 5'-diphosphate + [thioredoxin]-disulfide + H2O = a ribonucleoside 5'-diphosphate + [thioredoxin]-dithiol. Its activity is regulated as follows. Under complex allosteric control mediated by deoxynucleoside triphosphates and ATP binding to separate specificity and activation sites on the M1 subunit. The type of nucleotide bound at the specificity site determines substrate preference. It seems probable that ATP makes the enzyme reduce CDP and UDP, dGTP favors ADP reduction and dTTP favors GDP reduction. Stimulated by ATP and inhibited by dATP binding to the activity site, the dATP inhibition is mediated by AHCYL1 which stabilizes dATP in the site. In terms of biological role, provides the precursors necessary for DNA synthesis. Catalyzes the biosynthesis of deoxyribonucleotides from the corresponding ribonucleotides. This is Ribonucleoside-diphosphate reductase large subunit (RRM1) from Pongo abelii (Sumatran orangutan).